The following is a 559-amino-acid chain: Phenylalanine--tRNA ligase beta subunit (559 aa).

Positions 274 to 350 (FEPKIIDVHT…LGYGFNELPA (77 aa)) constitute a B5 domain. Residues Asp-328, Asp-334, Glu-337, and Asn-338 each coordinate Mg(2+).

The protein belongs to the phenylalanyl-tRNA synthetase beta subunit family. Type 2 subfamily. In terms of assembly, tetramer of two alpha and two beta subunits. Mg(2+) serves as cofactor.

It is found in the cytoplasm. It carries out the reaction tRNA(Phe) + L-phenylalanine + ATP = L-phenylalanyl-tRNA(Phe) + AMP + diphosphate + H(+). The protein is Phenylalanine--tRNA ligase beta subunit of Methanosphaera stadtmanae (strain ATCC 43021 / DSM 3091 / JCM 11832 / MCB-3).